Consider the following 408-residue polypeptide: Na(+)-translocating NADH-quinone reductase subunit F (408 aa).

The helical transmembrane segment at 4-24 (IYLGVGMFIAIVLALVLIIMF) threads the bilayer. The 2Fe-2S ferredoxin-type domain occupies 33–127 (GEVTISINGD…DMDIELPEEI (95 aa)). Cys-70, Cys-76, Cys-79, and Cys-111 together coordinate [2Fe-2S] cluster. Residues 130–270 (IKKWDCEVIS…SGPFGEFFAK (141 aa)) form the FAD-binding FR-type domain.

Belongs to the NqrF family. In terms of assembly, composed of six subunits; NqrA, NqrB, NqrC, NqrD, NqrE and NqrF. [2Fe-2S] cluster is required as a cofactor. It depends on FAD as a cofactor.

It localises to the cell inner membrane. The catalysed reaction is a ubiquinone + n Na(+)(in) + NADH + H(+) = a ubiquinol + n Na(+)(out) + NAD(+). Functionally, NQR complex catalyzes the reduction of ubiquinone-1 to ubiquinol by two successive reactions, coupled with the transport of Na(+) ions from the cytoplasm to the periplasm. The first step is catalyzed by NqrF, which accepts electrons from NADH and reduces ubiquinone-1 to ubisemiquinone by a one-electron transfer pathway. This chain is Na(+)-translocating NADH-quinone reductase subunit F, found in Pseudoalteromonas atlantica (strain T6c / ATCC BAA-1087).